Consider the following 216-residue polypeptide: MSMDFSDQRLSYEKGQLDQQSIPASPFELLNVWMQQAIEENVQEPYAMSLATCGADNKPSVRIVLLREITDKGIVFYTNYESAKGQDIAENPNVEALFFWHKLERQIRISGSIAKIDADKSAAYFQKRPHDSQVGAWVSQPQSGEVANRDVMEQTFEQLKIDYPEGAAVPTPEFWGGYEITVNEIEFWQGRANRMHDRIVYHKEADGSFSTKRLLP.

Substrate-binding positions include 9-12 (RLSY) and R67. Residues 62-67 (RIVLLR), 77-78 (YT), K84, and Q106 contribute to the FMN site. Substrate is bound by residues Y124, R128, and S132. Residues 142–143 (QS) and W188 contribute to the FMN site. 194–196 (RMH) is a substrate binding site. Residue R198 participates in FMN binding.

This sequence belongs to the pyridoxamine 5'-phosphate oxidase family. In terms of assembly, homodimer. FMN serves as cofactor.

The enzyme catalyses pyridoxamine 5'-phosphate + O2 + H2O = pyridoxal 5'-phosphate + H2O2 + NH4(+). The catalysed reaction is pyridoxine 5'-phosphate + O2 = pyridoxal 5'-phosphate + H2O2. It functions in the pathway cofactor metabolism; pyridoxal 5'-phosphate salvage; pyridoxal 5'-phosphate from pyridoxamine 5'-phosphate: step 1/1. The protein operates within cofactor metabolism; pyridoxal 5'-phosphate salvage; pyridoxal 5'-phosphate from pyridoxine 5'-phosphate: step 1/1. In terms of biological role, catalyzes the oxidation of either pyridoxine 5'-phosphate (PNP) or pyridoxamine 5'-phosphate (PMP) into pyridoxal 5'-phosphate (PLP). The protein is Pyridoxine/pyridoxamine 5'-phosphate oxidase of Psychrobacter cryohalolentis (strain ATCC BAA-1226 / DSM 17306 / VKM B-2378 / K5).